The sequence spans 578 residues: MPTILVQSYGFRQKMKTIFIPTALALLLAACSGNKVTETLKNEAYGNSEFYINKAEQSRNIEEQQSYRLLAVRKLIEENKVVEAQNTFSEILVAKLNDEQKLEHRLLIAQLAALQGNTEAQGVLRALPQTLLSQSQRLRVYQTQARIAENQNDVIAAVNARALMDSYMTDTQSRQANNDKIWEMLRNANRGMLEKAVAGPGEIGLAGWLALVVAYNQNMSNPAQLPQVIEMWKQQYPNHSAVLLLPIELRNVSSFQQTQLNGVALLLPLSGDAKILGEIIKRGFDDAKGTTTMQVQVFDTDSAPINDLLMQAKQQGAQTIIGPLLKPRVDEMLTSPEISNINVLALNSTPNVRAVAKVCYYGLSPEAEARSAAERFLKDGLQHAVVVAPNGDFGTRSAEAFAQRWRQLTNRDTDIRYYNQAFEVTSLLQGSGIGQGSGLYALGTAEQLSDLKQSLDNSPLANQFPIYTSSRSNSPNNGPDFRLTMEGVKFSEIPLLSDPSSSEYKKAEQIVESDFSMMRLYAMGSDTWSIANKFNEFRQIPGYKVHGLTGVLSAGPNCNIEREMNWLQYRGGSIVDAN.

The first 30 residues, 1–30, serve as a signal peptide directing secretion; it reads MPTILVQSYGFRQKMKTIFIPTALALLLAA. The N-palmitoyl cysteine moiety is linked to residue Cys-31. Cys-31 carries the S-diacylglycerol cysteine lipid modification.

Belongs to the LpoA family. In terms of assembly, interacts with PBP1a.

Its subcellular location is the cell outer membrane. Its function is as follows. Regulator of peptidoglycan synthesis that is essential for the function of penicillin-binding protein 1A (PBP1a). The protein is Penicillin-binding protein activator LpoA of Glaesserella parasuis serovar 5 (strain SH0165) (Haemophilus parasuis).